The primary structure comprises 560 residues: MKVWMAILISILCWQSSVWAVCPAWSPARAQEEISRLQQQIKQWDDVYWKEGKSEVEDGVYDQLSARLTQWQRCFGSEPRDVMMPPLNGAVMHPVAHTGVRKMVDKNALSLWMRERSDLWVQPKVDGVAVTLVYRDGKLNKAISRGNGLKGEDWTQKVSLISAVPQTVSGPLANSTLQGEIFLQREGHIQQQMGGINARAKVAGLMMRQDDSDTLNSLGVFVWAWPDGPQLMSDRLKELATAGFTLTQTYTRAVKNADEVARVRNEWWKAELPFVTDGVVVRAAKEPESRHWLPGQAEWLVAWKYQPVAQVAEVKAIQFAVGKSGKISVVASLAPVMLDDKKVQRVNIGSVRRWQEWDIAPGDQILVSLAGQGIPRIDDVVWRGAERTKPTPPENRFNSLTCYFASDVCQEQFISRLVWLGAKQVLGLDGIGEAGWRALHQTHRFEHIFSWLLLTPEQLQNTPGIAKSKSAQLWHQFNLARKQPFTRWVMAMGIPLTRAALNASDERSWSQLLFSTEQFWQQLPGTGSGRARQVIEWKENAQIKKLGSWLAAQQITGFEP.

Lys124 functions as the N6-AMP-lysine intermediate in the catalytic mechanism.

Belongs to the NAD-dependent DNA ligase family. LigB subfamily.

It carries out the reaction NAD(+) + (deoxyribonucleotide)n-3'-hydroxyl + 5'-phospho-(deoxyribonucleotide)m = (deoxyribonucleotide)n+m + AMP + beta-nicotinamide D-nucleotide.. Catalyzes the formation of phosphodiester linkages between 5'-phosphoryl and 3'-hydroxyl groups in double-stranded DNA using NAD as a coenzyme and as the energy source for the reaction. The chain is DNA ligase B from Escherichia coli O9:H4 (strain HS).